The sequence spans 519 residues: MIOREX complex component 12 (519 aa).

The transit peptide at 1–35 directs the protein to the mitochondrion; it reads MLRSLHSAATLSNKRFYSLISHSNRKNIIKKLLRH.

In terms of assembly, associates with the mitochondrial ribosome.

The protein resides in the mitochondrion. Its function is as follows. Component of MIOREX complexes, large expressome-like assemblies of ribosomes with factors involved in all the steps of post-transcriptional gene expression. This is MIOREX complex component 12 from Saccharomyces cerevisiae (strain ATCC 204508 / S288c) (Baker's yeast).